Here is a 256-residue protein sequence, read N- to C-terminus: Omega-amidase YafV (256 aa).

A CN hydrolase domain is found at 4-234 (LKITLLQQPL…ATRIDAELSM (231 aa)). Glu-42 acts as the Proton acceptor in catalysis. Lys-107 is a catalytic residue. Cys-141 (nucleophile) is an active-site residue.

This sequence belongs to the carbon-nitrogen hydrolase superfamily. NIT1/NIT2 family.

It catalyses the reaction a monoamide of a dicarboxylate + H2O = a dicarboxylate + NH4(+). Hydrolyzes alpha-ketoglutaramate (a-KGM) to alpha-ketoglutarate (alpha-KG) and ammonia (specific activity 6.65 umol/min/mg), has weak activity on L-glutamine, almost no activity on deaminated glutathione (dGSH) and none on glutathione. May function as a metabolite repair enzyme. The sequence is that of Omega-amidase YafV (yafV) from Escherichia coli (strain B / BL21-DE3).